The sequence spans 141 residues: FRGRAPRPLVGRSCQAAQHPHTRPKRQVRDCGREGDLRAGKAADRRLPRARETCSRFGEGVRQKDVHKGPVEGTVLNPAGPPGDQAQRADVPDPGRSRRATVPIAQERRLEHRPILVYPESDNMYNLIREAWLSLERGTHR.

Residues 1 to 101 form a disordered region; sequence FRGRAPRPLV…PDPGRSRRAT (101 aa). Residues 27 to 70 are compositionally biased toward basic and acidic residues; that stretch reads QVRDCGREGDLRAGKAADRRLPRARETCSRFGEGVRQKDVHKGP.

This is an uncharacterized protein from Dhori virus (strain Indian/1313/61) (Dho).